A 951-amino-acid polypeptide reads, in one-letter code: Metal transporter CNNM1 (951 aa).

A helical transmembrane segment spans residues 23–43; the sequence is AVLLLFFSLSPRPPAAAAWLL. Positions 116-135 are disordered; sequence GGVAPSAVPTRPPGPQRCRE. The CNNM transmembrane domain occupies 218 to 414; that stretch reads LLPPAWLRAL…DPYSDLVKEE (197 aa). 3 helical membrane passes run 222 to 242, 282 to 302, and 321 to 341; these read AWLR…FSGL, LLCT…GWLY, and IHFP…GAEI. CBS domains follow at residues 433–495 and 502–568; these read LTPL…CTPL and YNRP…ILDE. Polar residues-rich tracts occupy residues 731–740 and 814–824; these read SRCSGLNRSE and KAPTTRGTPQT. 2 disordered regions span residues 731 to 753 and 795 to 830; these read SRCS…GGSN and MDSS…DDPA. Phosphothreonine is present on residues Thr-821 and Thr-824. The residue at position 850 (Ser-850) is a Phosphoserine. Positions 920 to 951 are disordered; sequence KLLRTLSGQKRKRSPEGERTSEDNSNLTPLIT. The span at 942-951 shows a compositional bias: polar residues; it reads DNSNLTPLIT.

The protein belongs to the ACDP family. In terms of tissue distribution, restricted to brain and testis.

It is found in the cell membrane. Probable metal transporter. This Homo sapiens (Human) protein is Metal transporter CNNM1 (CNNM1).